A 359-amino-acid chain; its full sequence is Peptide chain release factor 1 (359 aa).

Gln-236 is modified (N5-methylglutamine).

Belongs to the prokaryotic/mitochondrial release factor family. In terms of processing, methylated by PrmC. Methylation increases the termination efficiency of RF1.

It localises to the cytoplasm. In terms of biological role, peptide chain release factor 1 directs the termination of translation in response to the peptide chain termination codons UAG and UAA. The chain is Peptide chain release factor 1 (prfA) from Mycoplasma genitalium (strain ATCC 33530 / DSM 19775 / NCTC 10195 / G37) (Mycoplasmoides genitalium).